The primary structure comprises 238 residues: 4-hydroxy-tetrahydrodipicolinate reductase (238 aa).

12–17 (GASGRM) serves as a coordination point for NAD(+). Arg-40 is a binding site for NADP(+). NAD(+) contacts are provided by residues 93–95 (GTT) and 117–120 (ASNF). Residue His-149 is the Proton donor/acceptor of the active site. His-150 contributes to the (S)-2,3,4,5-tetrahydrodipicolinate binding site. Lys-153 acts as the Proton donor in catalysis. 159–160 (GT) serves as a coordination point for (S)-2,3,4,5-tetrahydrodipicolinate.

This sequence belongs to the DapB family.

Its subcellular location is the cytoplasm. It catalyses the reaction (S)-2,3,4,5-tetrahydrodipicolinate + NAD(+) + H2O = (2S,4S)-4-hydroxy-2,3,4,5-tetrahydrodipicolinate + NADH + H(+). The catalysed reaction is (S)-2,3,4,5-tetrahydrodipicolinate + NADP(+) + H2O = (2S,4S)-4-hydroxy-2,3,4,5-tetrahydrodipicolinate + NADPH + H(+). It participates in amino-acid biosynthesis; L-lysine biosynthesis via DAP pathway; (S)-tetrahydrodipicolinate from L-aspartate: step 4/4. Functionally, catalyzes the conversion of 4-hydroxy-tetrahydrodipicolinate (HTPA) to tetrahydrodipicolinate. The polypeptide is 4-hydroxy-tetrahydrodipicolinate reductase (Xanthomonas campestris pv. campestris (strain 8004)).